Consider the following 154-residue polypeptide: TSET complex member tstD (154 aa).

The protein belongs to the adaptor complexes small subunit family. In terms of assembly, component of the TSET complex, a heterohexamer composed of tstA, tstB, tstC, tstD, tstE and tstF, which may act in plasma membrane turnover. tstA, tstB, tstC and tstD are likely to be the core complex members with tstE and tstF acting as associated scaffold proteins.

The protein localises to the cell membrane. It localises to the cytoplasm. In Dictyostelium discoideum (Social amoeba), this protein is TSET complex member tstD.